The sequence spans 717 residues: Photosystem I P700 chlorophyll a apoprotein A1 (717 aa).

8 helical membrane passes run 59–82, 145–168, 184–208, 280–298, 335–358, 374–400, 422–444, and 520–538; these read VFRA…FHGA, LYCT…FHYH, LNHH…HVSL, TAHH…GHMY, WHAQ…HHMY, LSLF…IFMV, AIVS…LYIH, and FLVH…LILL. [4Fe-4S] cluster is bound by residues Cys562 and Cys571. Helical transmembrane passes span 578–599 and 653–675; these read HVFL…HFSW and LSAY…MFLF. His664 contributes to the chlorophyll a' binding site. Chlorophyll a-binding residues include Met672 and Tyr680. Position 681 (Trp681) interacts with phylloquinone. A helical membrane pass occupies residues 713–717; it reads AVGVA.

The protein belongs to the PsaA/PsaB family. The PsaA/B heterodimer binds the P700 chlorophyll special pair and subsequent electron acceptors. PSI consists of a core antenna complex that captures photons, and an electron transfer chain that converts photonic excitation into a charge separation. The eukaryotic PSI reaction center is composed of at least 11 subunits. P700 is a chlorophyll a/chlorophyll a' dimer, A0 is one or more chlorophyll a, A1 is one or both phylloquinones and FX is a shared 4Fe-4S iron-sulfur center. is required as a cofactor.

The protein resides in the plastid. The protein localises to the chloroplast thylakoid membrane. The enzyme catalyses reduced [plastocyanin] + hnu + oxidized [2Fe-2S]-[ferredoxin] = oxidized [plastocyanin] + reduced [2Fe-2S]-[ferredoxin]. Functionally, psaA and PsaB bind P700, the primary electron donor of photosystem I (PSI), as well as the electron acceptors A0, A1 and FX. PSI is a plastocyanin-ferredoxin oxidoreductase, converting photonic excitation into a charge separation, which transfers an electron from the donor P700 chlorophyll pair to the spectroscopically characterized acceptors A0, A1, FX, FA and FB in turn. Oxidized P700 is reduced on the lumenal side of the thylakoid membrane by plastocyanin. The protein is Photosystem I P700 chlorophyll a apoprotein A1 of Cycas revoluta (Sago palm).